The chain runs to 346 residues: D-alanine--D-alanine ligase (346 aa).

The ATP-grasp domain occupies 133-327; it reads KLYAKSVGVK…ALADQISLEK (195 aa). Residue 159–211 participates in ATP binding; it reads LSFPCIIKPARLGSSIGISIVKDEKDLEYAKDVGFEFDNDLVVEEFKNNIKEY. Residues D284, E296, and N298 each contribute to the Mg(2+) site.

The protein belongs to the D-alanine--D-alanine ligase family. Requires Mg(2+) as cofactor. Mn(2+) is required as a cofactor.

The protein resides in the cytoplasm. It catalyses the reaction 2 D-alanine + ATP = D-alanyl-D-alanine + ADP + phosphate + H(+). The protein operates within cell wall biogenesis; peptidoglycan biosynthesis. Cell wall formation. In Campylobacter jejuni subsp. jejuni serotype O:23/36 (strain 81-176), this protein is D-alanine--D-alanine ligase.